Here is a 698-residue protein sequence, read N- to C-terminus: MAAAGAAVARSPGIGAGPALRARRSPPPRAARLPRLLVLLAAAAVGPGAGGAARLYRAGEDAVWVLDSGSVRGATANSSAAWLVQFYSSWCGHCIGYAPTWRALAGDVRDWASAIRVAALDCMEEKNQAVCHDYDIHFYPTFRYFKAFTKEFTTGENFKGPDRELRTVRQTMIDFLQNHTEGSRPPACPRLDPIQPSDVLSLLDNRGSHYVAIVFESNSSYLGREVILDLIPYESIVVTRALDGDKAFLEKLGVSSVPSCYLIYPNGSHGLINVVKPLRAFFSSYLKSLPDVRKKSLPLPEKPHKEENSEIVVWREFDKSKLYTVDLESGLHYLLRVELAAHKSLAGAELKTLKDFVTVLAKLFPGRPPVKKLLEMLQEWLASLPLDRIPYNAVLDLVNNKMRISGIFLTNHIKWVGCQGSRSELRGYPCSLWKLFHTLTVEASTHPDALVGTGFEDDPQAVLQTMRRYVHTFFGCKECGEHFEEMAKESMDSVKTPDQAILWLWKKHNMVNGRLAGHLSEDPRFPKLQWPTPDLCPACHEEIKGLASWDEGHVLTFLKQHYGRDNLLDTYSADQGDSSEGGTLARGEEEEKRLTPPEVSHGDRDTQSVRPPGALGPRPALPESLHHSLDGKLQSLDGPGAHKEVGGAAPFLGVDFSSLDMSLCVVLYVASSLFLMVMYFFFRVRSRRWKVKHHHPAV.

An N-terminal signal peptide occupies residues 1–21 (MAAAGAAVARSPGIGAGPALR). Residues 34 to 178 (PRLLVLLAAA…RQTMIDFLQN (145 aa)) enclose the Thioredoxin domain. The N-linked (GlcNAc...) asparagine glycan is linked to N77. Catalysis depends on nucleophile residues C91 and C94. 2 disulfides stabilise this stretch: C91-C94 and C122-C131. N-linked (GlcNAc...) asparagine glycans are attached at residues N178, N218, and N266. Residues C418 and C430 are joined by a disulfide bond. The ERV/ALR sulfhydryl oxidase domain maps to 421 to 530 (SRSELRGYPC…EDPRFPKLQW (110 aa)). FAD-binding positions include R426, W433, H437, E478, H482, 505–512 (WKKHNMVN), K527, and W530. A disulfide bridge links C476 with C479. A disulfide bridge connects residues C536 and C539. The tract at residues 570 to 624 (TYSADQGDSSEGGTLARGEEEEKRLTPPEVSHGDRDTQSVRPPGALGPRPALPES) is disordered. Residues 572 to 581 (SADQGDSSEG) show a composition bias toward polar residues. At S579 the chain carries Phosphoserine. Over residues 586 to 607 (RGEEEEKRLTPPEVSHGDRDTQ) the composition is skewed to basic and acidic residues. The span at 610-622 (RPPGALGPRPALP) shows a compositional bias: low complexity. The chain crosses the membrane as a helical span at residues 662–682 (SLCVVLYVASSLFLMVMYFFF).

It belongs to the quiescin-sulfhydryl oxidase (QSOX) family. FAD is required as a cofactor. Expressed in pancreas, brain, placenta, kidney, heart and fetal tissues. Weakly expressed in lung, liver and skeletal muscles.

It localises to the membrane. Its subcellular location is the secreted. The protein localises to the cell membrane. It is found in the nucleus membrane. The enzyme catalyses 2 R'C(R)SH + O2 = R'C(R)S-S(R)CR' + H2O2. Functionally, catalyzes the oxidation of sulfhydryl groups in peptide and protein thiols to disulfides with the reduction of oxygen to hydrogen peroxide. May contribute to disulfide bond formation in a variety of secreted proteins. Also seems to play a role in regulating the sensitization of neuroblastoma cells for interferon-gamma-induced apoptosis. In Homo sapiens (Human), this protein is Sulfhydryl oxidase 2 (QSOX2).